The primary structure comprises 191 residues: dCTP deaminase, dUMP-forming (191 aa).

Residues 101-106 (KSSLGR), Asp-119, 127-129 (TLE), Gln-148, Tyr-162, and Gln-174 contribute to the dCTP site. Glu-129 acts as the Proton donor/acceptor in catalysis.

This sequence belongs to the dCTP deaminase family. As to quaternary structure, homotrimer.

The catalysed reaction is dCTP + 2 H2O = dUMP + NH4(+) + diphosphate. The protein operates within pyrimidine metabolism; dUMP biosynthesis; dUMP from dCTP: step 1/1. Functionally, bifunctional enzyme that catalyzes both the deamination of dCTP to dUTP and the hydrolysis of dUTP to dUMP without releasing the toxic dUTP intermediate. This Streptomyces avermitilis (strain ATCC 31267 / DSM 46492 / JCM 5070 / NBRC 14893 / NCIMB 12804 / NRRL 8165 / MA-4680) protein is dCTP deaminase, dUMP-forming.